Reading from the N-terminus, the 136-residue chain is Large ribosomal subunit protein uL14 (136 aa).

It belongs to the universal ribosomal protein uL14 family.

The protein is Large ribosomal subunit protein uL14 (rpl23) of Dictyostelium discoideum (Social amoeba).